Here is a 300-residue protein sequence, read N- to C-terminus: MAKPLSISSQPSVNVAWRDYFEMTKPKVVALMLLTVLVGMCLAMPTILPVQPLIAGLLGIAMMAGSAAALNHLIDRRIDGLMARTYNRPLPKGRISATRALIFAAALGSLGFVILYVFTNPLTAWLTFASLIGYALIYTAYLKRATPQNIVIGGLAGAMPPLLGWTAVTNQFHGHALLLVIIIFLWTPPHFWALAIHRRAEYAKVDIPMLPVTHGVEFTKTCILLYTILLAIACLLPVLVGMSGPLYFVCSSALSCGFIYKAWQLKYQDHEGLAMQVFRFSIYHLMLLFMALLLDHYLWA.

Transmembrane regions (helical) follow at residues 28-48 (VVALMLLTVLVGMCLAMPTIL), 50-70 (VQPLIAGLLGIAMMAGSAAAL), 100-120 (ALIFAAALGSLGFVILYVFTN), 122-142 (LTAWLTFASLIGYALIYTAYL), 149-169 (NIVIGGLAGAMPPLLGWTAVT), 176-196 (ALLLVIIIFLWTPPHFWALAI), 222-242 (CILLYTILLAIACLLPVLVGM), 243-263 (SGPLYFVCSSALSCGFIYKAW), and 280-300 (FSIYHLMLLFMALLLDHYLWA).

This sequence belongs to the UbiA prenyltransferase family. Protoheme IX farnesyltransferase subfamily.

The protein localises to the cell inner membrane. It catalyses the reaction heme b + (2E,6E)-farnesyl diphosphate + H2O = Fe(II)-heme o + diphosphate. It functions in the pathway porphyrin-containing compound metabolism; heme O biosynthesis; heme O from protoheme: step 1/1. In terms of biological role, converts heme B (protoheme IX) to heme O by substitution of the vinyl group on carbon 2 of heme B porphyrin ring with a hydroxyethyl farnesyl side group. The sequence is that of Protoheme IX farnesyltransferase from Shewanella oneidensis (strain ATCC 700550 / JCM 31522 / CIP 106686 / LMG 19005 / NCIMB 14063 / MR-1).